The sequence spans 114 residues: UPF0102 protein HPSH_02690 (114 aa).

The protein belongs to the UPF0102 family.

In Helicobacter pylori (strain Shi470), this protein is UPF0102 protein HPSH_02690.